Consider the following 121-residue polypeptide: Phosphoribosyl-ATP pyrophosphatase (121 aa).

The protein belongs to the PRA-PH family.

It localises to the cytoplasm. It carries out the reaction 1-(5-phospho-beta-D-ribosyl)-ATP + H2O = 1-(5-phospho-beta-D-ribosyl)-5'-AMP + diphosphate + H(+). It functions in the pathway amino-acid biosynthesis; L-histidine biosynthesis; L-histidine from 5-phospho-alpha-D-ribose 1-diphosphate: step 2/9. In Nitrosospira multiformis (strain ATCC 25196 / NCIMB 11849 / C 71), this protein is Phosphoribosyl-ATP pyrophosphatase.